The chain runs to 313 residues: Porphobilinogen deaminase (313 aa).

At Cys-242 the chain carries S-(dipyrrolylmethanemethyl)cysteine.

The protein belongs to the HMBS family. Monomer. The cofactor is dipyrromethane.

The enzyme catalyses 4 porphobilinogen + H2O = hydroxymethylbilane + 4 NH4(+). It participates in porphyrin-containing compound metabolism; protoporphyrin-IX biosynthesis; coproporphyrinogen-III from 5-aminolevulinate: step 2/4. Its function is as follows. Tetrapolymerization of the monopyrrole PBG into the hydroxymethylbilane pre-uroporphyrinogen in several discrete steps. The protein is Porphobilinogen deaminase of Pseudomonas fluorescens (strain Pf0-1).